Consider the following 473-residue polypeptide: Chaperone SurA (473 aa).

A signal peptide spans 1-36 (MTNDRLFAGIARVLSVRPLAAALALLLTLPLIGVQA). PpiC domains are found at residues 214–315 (SLAL…KVIE) and 326–425 (ITQT…QVLE).

The protein localises to the periplasm. It carries out the reaction [protein]-peptidylproline (omega=180) = [protein]-peptidylproline (omega=0). Chaperone involved in the correct folding and assembly of outer membrane proteins. Recognizes specific patterns of aromatic residues and the orientation of their side chains, which are found more frequently in integral outer membrane proteins. May act in both early periplasmic and late outer membrane-associated steps of protein maturation. This is Chaperone SurA from Polaromonas sp. (strain JS666 / ATCC BAA-500).